The chain runs to 501 residues: Cytokinin dehydrogenase 2 (501 aa).

Residues 1–22 (MANLRLMITLITVLMITKSSNG) form the signal peptide. Residues Asn-32 and Asn-51 are each glycosylated (N-linked (GlcNAc...) asparagine). The region spanning 53–226 (TTVTPGGVIC…TRARIVLDHA (174 aa)) is the FAD-binding PCMH-type domain. Positions 87, 89, and 91 each coordinate FAD. The residue at position 92 (His-92) is a Pros-8alpha-FAD histidine. The FAD site is built by Ser-93 and Gln-97. Asn-107 carries N-linked (GlcNAc...) asparagine glycosylation. Asp-150, Thr-155, Ser-161, Ile-165, Ile-216, Tyr-460, Ser-495, and Gln-498 together coordinate FAD.

It belongs to the oxygen-dependent FAD-linked oxidoreductase family. The cofactor is FAD. Expressed in the shoot apex, in stipules, and occasionally in the most apical part of the inflorescence stems. Not detected in roots.

The protein resides in the endoplasmic reticulum. It is found in the secreted. It localises to the extracellular space. It carries out the reaction N(6)-dimethylallyladenine + A + H2O = 3-methyl-2-butenal + adenine + AH2. Catalyzes the oxidation of cytokinins, a family of N(6)-substituted adenine derivatives that are plant hormones, where the substituent is an isopentenyl group. Modulates asymmetric cytokinin signaling in emerged lateral roots. Its activity determines cell elongation and number in emerged lateral roots and defines angular growth of lateral roots. The protein is Cytokinin dehydrogenase 2 (CKX2) of Arabidopsis thaliana (Mouse-ear cress).